A 307-amino-acid polypeptide reads, in one-letter code: Ribosomal RNA small subunit methyltransferase H (307 aa).

S-adenosyl-L-methionine is bound by residues 33–35 (GGY), D51, F78, D96, and Q103.

This sequence belongs to the methyltransferase superfamily. RsmH family.

The protein resides in the cytoplasm. The catalysed reaction is cytidine(1402) in 16S rRNA + S-adenosyl-L-methionine = N(4)-methylcytidine(1402) in 16S rRNA + S-adenosyl-L-homocysteine + H(+). Specifically methylates the N4 position of cytidine in position 1402 (C1402) of 16S rRNA. This Rickettsia conorii (strain ATCC VR-613 / Malish 7) protein is Ribosomal RNA small subunit methyltransferase H.